The chain runs to 321 residues: Annexin D3 (321 aa).

An N-acetylalanine modification is found at Ala-2. Annexin repeat units lie at residues 11-82 (PSPA…SWTY), 83-159 (DPAE…TLAS), 171-243 (EVAT…VAIF), and 247-318 (TPEK…TLLG). The Ca(2+) site is built by Gly-26, Gly-28, and Glu-68. Thr-117 is modified (phosphothreonine). Ca(2+) contacts are provided by Ile-260 and Gly-264. Tyr-289 carries the phosphotyrosine modification. Position 304 (Asp-304) interacts with Ca(2+).

The protein belongs to the annexin (TC 1.A.31.1) family. As to expression, expressed mainly in roots and flowers. Lower in stems and leaves.

This Arabidopsis thaliana (Mouse-ear cress) protein is Annexin D3 (ANN3).